The sequence spans 1057 residues: Structural maintenance of chromosomes protein 6B (1057 aa).

The region spanning 22 to 1047 (ILRIKVENFM…ISMVKSHERI (1026 aa)) is the Zinc-hook domain. Residue 49–56 (GQNGSGKS) coordinates ATP. The stretch at 135 to 448 (KVSNKRDELR…NDLKKHQTNK (314 aa)) forms a coiled coil. The flexible hinge stretch occupies residues 449-632 (VTAFGGDRVI…PPLSRRPSRL (184 aa)). Residues 633–904 (CASFDDQIKD…QDHREKLMAC (272 aa)) adopt a coiled-coil conformation. Positions 818 to 828 (KNKRKESDQKA) are enriched in basic and acidic residues. Residues 818–845 (KNKRKESDQKASEICPESEIESLGPWDG) are disordered.

Belongs to the SMC family. SMC6 subfamily. Forms a heterodimer with SMC5. The SMC5-SMC6 complex is composed of the SMC5 and SMC6 heterodimer attached via their hinge domain and from the non-SMC subunit NSE4A or NSE4B. As to expression, expressed in seedlings, rosette leaves and floral buds.

It is found in the nucleus. It localises to the chromosome. Core component of the SMC5-SMC6 complex that promotes sister chromatid alignment after DNA damage and facilitates double-stranded DNA breaks (DSBs) repair via homologous recombination between sister chromatids. The polypeptide is Structural maintenance of chromosomes protein 6B (SMC6B) (Arabidopsis thaliana (Mouse-ear cress)).